Reading from the N-terminus, the 297-residue chain is Pyrroline-5-carboxylate reductase 1 (297 aa).

This sequence belongs to the pyrroline-5-carboxylate reductase family.

The protein resides in the cytoplasm. It catalyses the reaction L-proline + NADP(+) = (S)-1-pyrroline-5-carboxylate + NADPH + 2 H(+). It carries out the reaction L-proline + NAD(+) = (S)-1-pyrroline-5-carboxylate + NADH + 2 H(+). It functions in the pathway amino-acid biosynthesis; L-proline biosynthesis; L-proline from L-glutamate 5-semialdehyde: step 1/1. Functionally, catalyzes the reduction of 1-pyrroline-5-carboxylate (PCA) to L-proline. This Bacillus spizizenii (strain ATCC 23059 / NRRL B-14472 / W23) (Bacillus subtilis subsp. spizizenii) protein is Pyrroline-5-carboxylate reductase 1 (proH).